Consider the following 247-residue polypeptide: MADS-box protein defh21 (247 aa).

Positions 1–61 (MGRGKIEVKR…GKLTEYCTPP (61 aa)) constitute an MADS-box domain. One can recognise a K-box domain in the interval 91–183 (NDQVIKELTR…WLMSNQIQRQ (93 aa)).

As to expression, expressed exclusively in a few inner cell layers of the inner integuments of the ovules.

The protein resides in the nucleus. Its function is as follows. Probable transcription factor. The polypeptide is MADS-box protein defh21 (DEFH21) (Antirrhinum majus (Garden snapdragon)).